A 443-amino-acid chain; its full sequence is UDP-N-acetylmuramate--L-alanine ligase (443 aa).

Residue 110-116 (GAHGKTS) coordinates ATP.

This sequence belongs to the MurCDEF family.

It localises to the cytoplasm. The enzyme catalyses UDP-N-acetyl-alpha-D-muramate + L-alanine + ATP = UDP-N-acetyl-alpha-D-muramoyl-L-alanine + ADP + phosphate + H(+). The protein operates within cell wall biogenesis; peptidoglycan biosynthesis. In terms of biological role, cell wall formation. The sequence is that of UDP-N-acetylmuramate--L-alanine ligase from Streptococcus equi subsp. zooepidemicus (strain H70).